Reading from the N-terminus, the 177-residue chain is ATP-dependent protease subunit HslV (177 aa).

Residue T6 is part of the active site. Na(+) contacts are provided by A162, C165, and T168.

Belongs to the peptidase T1B family. HslV subfamily. In terms of assembly, a double ring-shaped homohexamer of HslV is capped on each side by a ring-shaped HslU homohexamer. The assembly of the HslU/HslV complex is dependent on binding of ATP.

The protein resides in the cytoplasm. The catalysed reaction is ATP-dependent cleavage of peptide bonds with broad specificity.. With respect to regulation, allosterically activated by HslU binding. Functionally, protease subunit of a proteasome-like degradation complex believed to be a general protein degrading machinery. The sequence is that of ATP-dependent protease subunit HslV from Desulfovibrio desulfuricans (strain ATCC 27774 / DSM 6949 / MB).